Here is a 669-residue protein sequence, read N- to C-terminus: UvrABC system protein B (669 aa).

In terms of domain architecture, Helicase ATP-binding spans 26–183 (TNFHAGIAKQ…RHLTELQYTR (158 aa)). 39–46 (GVTGSGKT) is an ATP binding site. Positions 92–115 (YYDYYQPEAYVPASDTFIEKDSSI) match the Beta-hairpin motif. In terms of domain architecture, Helicase C-terminal spans 431–597 (QVDDLISQIN…SVVRPISDIL (167 aa)). The UVR domain maps to 631–666 (AAQMKMLEQQMYQHARDLEFEDAARIRDQIQRLREA).

The protein belongs to the UvrB family. As to quaternary structure, forms a heterotetramer with UvrA during the search for lesions. Interacts with UvrC in an incision complex.

Its subcellular location is the cytoplasm. The UvrABC repair system catalyzes the recognition and processing of DNA lesions. A damage recognition complex composed of 2 UvrA and 2 UvrB subunits scans DNA for abnormalities. Upon binding of the UvrA(2)B(2) complex to a putative damaged site, the DNA wraps around one UvrB monomer. DNA wrap is dependent on ATP binding by UvrB and probably causes local melting of the DNA helix, facilitating insertion of UvrB beta-hairpin between the DNA strands. Then UvrB probes one DNA strand for the presence of a lesion. If a lesion is found the UvrA subunits dissociate and the UvrB-DNA preincision complex is formed. This complex is subsequently bound by UvrC and the second UvrB is released. If no lesion is found, the DNA wraps around the other UvrB subunit that will check the other stand for damage. This is UvrABC system protein B from Xylella fastidiosa (strain M12).